The chain runs to 96 residues: Ubiquitin-related modifier 1 (96 aa).

Position 96 is a 1-thioglycine (glycine 96). Residue glycine 96 forms a Glycyl lysine isopeptide (Gly-Lys) (interchain with K-? in acceptor proteins) linkage.

This sequence belongs to the URM1 family. Post-translationally, C-terminal thiocarboxylation occurs in 2 steps, it is first acyl-adenylated (-COAMP) via the hesA/moeB/thiF part of UBA4, then thiocarboxylated (-COSH) via the rhodanese domain of UBA4.

The protein resides in the cytoplasm. It participates in tRNA modification; 5-methoxycarbonylmethyl-2-thiouridine-tRNA biosynthesis. In terms of biological role, acts as a sulfur carrier required for 2-thiolation of mcm(5)S(2)U at tRNA wobble positions of cytosolic tRNA(Lys), tRNA(Glu) and tRNA(Gln). Serves as sulfur donor in tRNA 2-thiolation reaction by being thiocarboxylated (-COSH) at its C-terminus by the MOCS3 homolog UBA4. The sulfur is then transferred to tRNA to form 2-thiolation of mcm(5)S(2)U. Prior mcm(5) tRNA modification by the elongator complex is required for 2-thiolation. Also acts as a ubiquitin-like protein (UBL) that is covalently conjugated via an isopeptide bond to lysine residues of target proteins such as AHP1. The thiocarboxylated form serves as substrate for conjugation and oxidative stress specifically induces the formation of UBL-protein conjugates. This chain is Ubiquitin-related modifier 1, found in Encephalitozoon cuniculi (strain GB-M1) (Microsporidian parasite).